Consider the following 589-residue polypeptide: PTS system mannitol-specific EIICB component (589 aa).

The Cytoplasmic segment spans residues 1 to 25 (MERKSSLKVRVQKLGTSLSNMVMPN). Residues 14–347 (LGTSLSNMVM…ILKSDNSDDD (334 aa)) enclose the PTS EIIC type-2 domain. The helical transmembrane segment at 26-47 (IGAFIAWGVAASLFIATGYLPN) threads the bilayer. At 48–51 (KALD) the chain is on the extracellular side. The chain crosses the membrane as a helical span at residues 52–73 (TNVVGPMLKYVLPLLIGYTGGY). The Cytoplasmic portion of the chain corresponds to 74–136 (NIHKQRGGVI…TGFEMLVNNF (63 aa)). The chain crosses the membrane as a helical span at residues 137-158 (SLGLIGFALMVLAFFVIGPVVA). At 159–167 (QLTEWVGIG) the chain is on the extracellular side. A helical membrane pass occupies residues 168 to 188 (VEAIVKVHLLPLANLIIEPAK). Topologically, residues 189–275 (ILFLNNALNH…VMMKPAMFLA (87 aa)) are cytoplasmic. Residues 276-295 (VIAGGLTGTFTFQTLGAGLT) traverse the membrane as a helical segment. Residues 296-317 (APASPGSIIAIMGMSPKGWGPH) lie on the Extracellular side of the membrane. A helical transmembrane segment spans residues 318-339 (LVVLAGVFAAAVASFLVASIIL). Residues 340–589 (KSDNSDDDSL…YDKLVARMHK (250 aa)) lie on the Cytoplasmic side of the membrane. Residues 383–478 (HQIIFACDAG…SLTNGKASGS (96 aa)) enclose the PTS EIIB type-2 domain. Cysteine 389 serves as the catalytic Phosphocysteine intermediate; for EIIB activity. Residue cysteine 389 is modified to Phosphocysteine; by EIIA.

As to quaternary structure, homodimer.

It localises to the cell membrane. It catalyses the reaction D-mannitol(out) + N(pros)-phospho-L-histidyl-[protein] = D-mannitol 1-phosphate(in) + L-histidyl-[protein]. Its function is as follows. The phosphoenolpyruvate-dependent sugar phosphotransferase system (sugar PTS), a major carbohydrate active transport system, catalyzes the phosphorylation of incoming sugar substrates concomitantly with their translocation across the cell membrane. The enzyme II CmtAB PTS system is involved in D-mannitol transport. In Streptococcus mutans serotype c (strain ATCC 700610 / UA159), this protein is PTS system mannitol-specific EIICB component.